The primary structure comprises 600 residues: NADH-quinone oxidoreductase subunit C/D (600 aa).

Residues 1–190 (MVNNMTDLTA…SPFELTKAKQ (190 aa)) are NADH dehydrogenase I subunit C. An NADH dehydrogenase I subunit D region spans residues 214–600 (DFMFLNLGPN…IDFVMSDVDR (387 aa)).

This sequence in the N-terminal section; belongs to the complex I 30 kDa subunit family. In the C-terminal section; belongs to the complex I 49 kDa subunit family. NDH-1 is composed of 13 different subunits. Subunits NuoB, CD, E, F, and G constitute the peripheral sector of the complex.

Its subcellular location is the cell inner membrane. The catalysed reaction is a quinone + NADH + 5 H(+)(in) = a quinol + NAD(+) + 4 H(+)(out). Its function is as follows. NDH-1 shuttles electrons from NADH, via FMN and iron-sulfur (Fe-S) centers, to quinones in the respiratory chain. The immediate electron acceptor for the enzyme in this species is believed to be ubiquinone. Couples the redox reaction to proton translocation (for every two electrons transferred, four hydrogen ions are translocated across the cytoplasmic membrane), and thus conserves the redox energy in a proton gradient. The chain is NADH-quinone oxidoreductase subunit C/D from Escherichia coli O6:H1 (strain CFT073 / ATCC 700928 / UPEC).